The chain runs to 603 residues: Myotubularin (603 aa).

Residues 1–13 are compositionally biased toward polar residues; it reads MASASTSKYNSHS. Residues 1–25 are disordered; sequence MASASTSKYNSHSLENESIKRTSRD. Residues S13 and S18 each carry the phosphoserine modification. Over residues 14-25 the composition is skewed to basic and acidic residues; that stretch reads LENESIKRTSRD. One can recognise a GRAM domain in the interval 29-97; it reads RDLTEAVPRL…GVISRIEKMG (69 aa). In terms of domain architecture, Myotubularin phosphatase spans 163 to 538; sequence GWTVYNPVEE…RHLELWVNYY (376 aa). N288, N313, and I314 together coordinate a 1,2-diacyl-sn-glycero-3-phospho-(1D-myo-inositol-3,5-bisphosphate). A 1,2-diacyl-sn-glycero-3-phospho-(1D-myo-inositol-3-phosphate)-binding residues include N288, N313, and I314. Catalysis depends on C375, which acts as the Phosphocysteine intermediate. Residues S376, D377, G378, W379, D380, R381, K417, and R421 each coordinate a 1,2-diacyl-sn-glycero-3-phospho-(1D-myo-inositol-3,5-bisphosphate). 6 residues coordinate a 1,2-diacyl-sn-glycero-3-phospho-(1D-myo-inositol-3-phosphate): S376, D377, G378, W379, D380, and R381. R421 is a binding site for a 1,2-diacyl-sn-glycero-3-phospho-(1D-myo-inositol-3-phosphate). Residue T495 is modified to Phosphothreonine. The tract at residues 579-603 is disordered; that stretch reads SAKLSDPPTSPSSPSQMMPHVQTHF. Position 588 is a phosphoserine (S588).

This sequence belongs to the protein-tyrosine phosphatase family. Non-receptor class myotubularin subfamily. Heterodimer with MTMR12. Interacts with KMT2A/MLL1 (via SET domain). Interacts with DES in skeletal muscle but not in cardiac muscle. Interacts with SPEG.

It localises to the cytoplasm. The protein resides in the cell membrane. The protein localises to the cell projection. It is found in the filopodium. Its subcellular location is the ruffle. It localises to the late endosome. The protein resides in the myofibril. The protein localises to the sarcomere. The catalysed reaction is a 1,2-diacyl-sn-glycero-3-phospho-(1D-myo-inositol-3-phosphate) + H2O = a 1,2-diacyl-sn-glycero-3-phospho-(1D-myo-inositol) + phosphate. The enzyme catalyses a 1,2-diacyl-sn-glycero-3-phospho-(1D-myo-inositol-3,5-bisphosphate) + H2O = a 1,2-diacyl-sn-glycero-3-phospho-(1D-myo-inositol-5-phosphate) + phosphate. It carries out the reaction 1,2-dioctanoyl-sn-glycero-3-phospho-(1-D-myo-inositol-3-phosphate) + H2O = 1,2-dioctanoyl-sn-glycero-3-phospho-(1D-myo-inositol) + phosphate. It catalyses the reaction 1,2-dioctanoyl-sn-glycero-3-phospho-(1D-myo-inositol-3,5-bisphosphate) + H2O = 1,2-dioctanoyl-sn-glycero-3-phospho-(1D-myo-inositol-5-phosphate) + phosphate. The catalysed reaction is 1,2-dihexadecanoyl-sn-glycero-3-phospho-(1D-myo-inositol-3,5-phosphate) + H2O = 1,2-dihexadecanoyl-sn-glycero-3-phospho-(1D-myo-inositol-5-phosphate) + phosphate. Allosterically activated by phosphatidylinositol 5-phosphate (PI5P). Its function is as follows. Lipid phosphatase which dephosphorylates phosphatidylinositol 3-monophosphate (PI3P) and phosphatidylinositol 3,5-bisphosphate (PI(3,5)P2). Has also been shown to dephosphorylate phosphotyrosine- and phosphoserine-containing peptides. Negatively regulates EGFR degradation through regulation of EGFR trafficking from the late endosome to the lysosome. Plays a role in vacuolar formation and morphology. Regulates desmin intermediate filament assembly and architecture. Plays a role in mitochondrial morphology and positioning. Required for skeletal muscle maintenance but not for myogenesis. In skeletal muscles, stabilizes MTMR12 protein levels. This is Myotubularin from Homo sapiens (Human).